Reading from the N-terminus, the 1174-residue chain is Pesticidal crystal protein Cry1Fa (1174 aa).

The protein belongs to the delta endotoxin family.

Promotes colloidosmotic lysis by binding to the midgut epithelial cells of many lepidopteran larvae. This is Pesticidal crystal protein Cry1Fa (cry1Fa) from Bacillus thuringiensis subsp. aizawai.